Here is a 390-residue protein sequence, read N- to C-terminus: Pyruvate dehydrogenase E1 component subunit alpha, somatic form, mitochondrial (390 aa).

The transit peptide at 1 to 29 (MRKMLAAVSRVLSGASQKPASRVLVASRN) directs the protein to the mitochondrion. K63 is modified (N6-acetyllysine; alternate). Residue K63 is modified to N6-succinyllysine; alternate. The pyruvate site is built by H92, Y118, R119, A157, G165, V167, D196, G197, A198, N225, and Y227. 2 residues coordinate thiamine diphosphate: Y118 and R119. 6 residues coordinate thiamine diphosphate: G165, V167, D196, G197, A198, and N225. D196 contacts Mg(2+). Residues N225 and Y227 each coordinate Mg(2+). Residue S232 is modified to Phosphoserine; by PDK1. K244 is modified (N6-acetyllysine; alternate). Residue K244 is modified to N6-succinyllysine; alternate. N6-succinyllysine is present on K277. H292 provides a ligand contact to thiamine diphosphate. Position 293 is a phosphoserine; by PDK1, PDK2, PDK3 and PDK4 (S293). S295 carries the post-translational modification Phosphoserine. Position 300 is a phosphoserine; by PDK1, PDK2, PDK3 and PDK4 (S300). The residue at position 301 (Y301) is a Phosphotyrosine. An N6-acetyllysine; alternate modification is found at K313. N6-succinyllysine; alternate is present on K313. K321 and K336 each carry N6-acetyllysine. Residue K385 is modified to N6-succinyllysine.

As to quaternary structure, heterotetramer of two PDHA1 and two PDHB subunits. The heterotetramer interacts with DLAT, and is part of the multimeric pyruvate dehydrogenase complex that contains multiple copies of pyruvate dehydrogenase (E1), dihydrolipoamide acetyltransferase (DLAT, E2) and lipoamide dehydrogenase (DLD, E3). These subunits are bound to an inner core composed of about 48 DLAT and 12 PDHX molecules. The cofactor is thiamine diphosphate. Mg(2+) is required as a cofactor. Post-translationally, phosphorylation at Ser-232, Ser-293 and Ser-300 by PDK family kinases inactivates the enzyme; for this phosphorylation at a single site is sufficient. Phosphorylation at Ser-293 interferes with access to active site, and thereby inactivates the enzyme. Dephosphorylation at all three sites, i.e. at Ser-232, Ser-293 and Ser-300, is required for reactivation. In terms of processing, acetylation alters the phosphorylation pattern. Deacetylated by SIRT3.

It localises to the mitochondrion matrix. The catalysed reaction is N(6)-[(R)-lipoyl]-L-lysyl-[protein] + pyruvate + H(+) = N(6)-[(R)-S(8)-acetyldihydrolipoyl]-L-lysyl-[protein] + CO2. Its activity is regulated as follows. Pyruvate dehydrogenase activity is inhibited by phosphorylation of PDHA1; it is reactivated by dephosphorylation. Its function is as follows. The pyruvate dehydrogenase complex catalyzes the overall conversion of pyruvate to acetyl-CoA and CO(2), and thereby links the glycolytic pathway to the tricarboxylic cycle. The protein is Pyruvate dehydrogenase E1 component subunit alpha, somatic form, mitochondrial (PDHA1) of Macaca fascicularis (Crab-eating macaque).